The chain runs to 455 residues: Ribosomal protein uS12 methylthiotransferase RimO (455 aa).

An MTTase N-terminal domain is found at 30–140; that stretch reads PTIGMVSLGC…VLDAVHGAVP (111 aa). The [4Fe-4S] cluster site is built by cysteine 39, cysteine 75, cysteine 104, cysteine 171, cysteine 175, and cysteine 178. The region spanning 157-386 is the Radical SAM core domain; sequence LTPRHFSYLK…MEKAQAISEV (230 aa). The region spanning 389–455 is the TRAM domain; it reads AAKVGRRIEV…GEYDIWGRPV (67 aa).

The protein belongs to the methylthiotransferase family. RimO subfamily. Requires [4Fe-4S] cluster as cofactor.

Its subcellular location is the cytoplasm. The catalysed reaction is L-aspartate(89)-[ribosomal protein uS12]-hydrogen + (sulfur carrier)-SH + AH2 + 2 S-adenosyl-L-methionine = 3-methylsulfanyl-L-aspartate(89)-[ribosomal protein uS12]-hydrogen + (sulfur carrier)-H + 5'-deoxyadenosine + L-methionine + A + S-adenosyl-L-homocysteine + 2 H(+). Catalyzes the methylthiolation of an aspartic acid residue of ribosomal protein uS12. This is Ribosomal protein uS12 methylthiotransferase RimO from Cereibacter sphaeroides (strain ATCC 17023 / DSM 158 / JCM 6121 / CCUG 31486 / LMG 2827 / NBRC 12203 / NCIMB 8253 / ATH 2.4.1.) (Rhodobacter sphaeroides).